A 310-amino-acid polypeptide reads, in one-letter code: Formimidoylglutamase (310 aa).

Residues histidine 120, aspartate 148, histidine 150, aspartate 152, aspartate 233, and aspartate 235 each contribute to the Mn(2+) site.

This sequence belongs to the arginase family. The cofactor is Mn(2+).

It catalyses the reaction N-formimidoyl-L-glutamate + H2O = formamide + L-glutamate. It functions in the pathway amino-acid degradation; L-histidine degradation into L-glutamate; L-glutamate from N-formimidoyl-L-glutamate (hydrolase route): step 1/1. Catalyzes the conversion of N-formimidoyl-L-glutamate to L-glutamate and formamide. The polypeptide is Formimidoylglutamase (Nocardia farcinica (strain IFM 10152)).